Here is a 383-residue protein sequence, read N- to C-terminus: MKNNLPPFIEIYRALIATPSISATEEALDQSNESLINLLAGWFRDLGFNVEVQPVPDTRHKFNLLASTGHGAGGLLLAGHTDTVPFDDGRWTRDPFTLTEHDNKLYGLGTADMKGFFAFILDALRDVDVTTLKKPLYILATADEETSMAGARYFAETTQLRPDCAIIGEPTSLQPIRAHKGHMSNAIRIQGQSGHSSDPARGVNAIELMHDAIGRIMQLRDLLKERYHFEAFTVPYPTLNLGAIHGGDASNRICACCELHMDIRPLPGMTLNDLNGLLGEALAPVSERWPGRLTVSELHPPIPGYECPPDHKLVQVVEKLLGAQTDVVNYCTEAPFIQTLCPTLVLGPGSINQAHQPDEYLETRFIKPTRELISQVVHHFCWH.

His-80 contributes to the Zn(2+) binding site. Asp-82 is an active-site residue. Residue Asp-112 coordinates Zn(2+). Residue Glu-144 is part of the active site. Zn(2+) is bound by residues Glu-145, Glu-169, and His-355.

It belongs to the peptidase M20A family. ArgE subfamily. As to quaternary structure, homodimer. It depends on Zn(2+) as a cofactor. Co(2+) serves as cofactor. Glutathione is required as a cofactor.

The protein localises to the cytoplasm. It catalyses the reaction N(2)-acetyl-L-ornithine + H2O = L-ornithine + acetate. The protein operates within amino-acid biosynthesis; L-arginine biosynthesis; L-ornithine from N(2)-acetyl-L-ornithine (linear): step 1/1. Its function is as follows. Catalyzes the hydrolysis of the amide bond of N(2)-acetylated L-amino acids. Cleaves the acetyl group from N-acetyl-L-ornithine to form L-ornithine, an intermediate in L-arginine biosynthesis pathway, and a branchpoint in the synthesis of polyamines. In Klebsiella pneumoniae (strain 342), this protein is Acetylornithine deacetylase.